The primary structure comprises 75 residues: Small ribosomal subunit protein bS18 (75 aa).

Belongs to the bacterial ribosomal protein bS18 family. In terms of assembly, part of the 30S ribosomal subunit. Forms a tight heterodimer with protein bS6.

Binds as a heterodimer with protein bS6 to the central domain of the 16S rRNA, where it helps stabilize the platform of the 30S subunit. In Buchnera aphidicola subsp. Acyrthosiphon pisum (strain 5A), this protein is Small ribosomal subunit protein bS18.